The primary structure comprises 361 residues: 3-dehydroquinate synthase (361 aa).

Residues 60-65 (DAEAAK), 94-98 (GATTD), 118-119 (TT), Lys-131, and Lys-140 contribute to the NAD(+) site. Residues Glu-173, His-242, and His-258 each contribute to the Zn(2+) site.

Belongs to the sugar phosphate cyclases superfamily. Dehydroquinate synthase family. Requires Co(2+) as cofactor. Zn(2+) is required as a cofactor. It depends on NAD(+) as a cofactor.

The protein localises to the cytoplasm. The catalysed reaction is 7-phospho-2-dehydro-3-deoxy-D-arabino-heptonate = 3-dehydroquinate + phosphate. The protein operates within metabolic intermediate biosynthesis; chorismate biosynthesis; chorismate from D-erythrose 4-phosphate and phosphoenolpyruvate: step 2/7. Catalyzes the conversion of 3-deoxy-D-arabino-heptulosonate 7-phosphate (DAHP) to dehydroquinate (DHQ). This Cutibacterium acnes (strain DSM 16379 / KPA171202) (Propionibacterium acnes) protein is 3-dehydroquinate synthase.